A 205-amino-acid polypeptide reads, in one-letter code: Small ribosomal subunit protein uS4 (205 aa).

A disordered region spans residues 18–46 (NIWGRPKSPVNRREYGPGQHGQRRKGKLS). The region spanning 94–157 (RRLDTVVFRA…KQLAIVLEAT (64 aa)) is the S4 RNA-binding domain.

The protein belongs to the universal ribosomal protein uS4 family. Part of the 30S ribosomal subunit. Contacts protein S5. The interaction surface between S4 and S5 is involved in control of translational fidelity.

In terms of biological role, one of the primary rRNA binding proteins, it binds directly to 16S rRNA where it nucleates assembly of the body of the 30S subunit. With S5 and S12 plays an important role in translational accuracy. The chain is Small ribosomal subunit protein uS4 from Bradyrhizobium sp. (strain BTAi1 / ATCC BAA-1182).